A 60-amino-acid chain; its full sequence is Cytochrome c oxidase subunit 9, mitochondrial (60 aa).

Residues 1-15 (MSALAPITGTLKKRI) are Mitochondrial matrix-facing. Residues 16 to 38 (ITDIVIGFSLGGVMASYWWWGFH) traverse the membrane as a helical segment. At 39–57 (KNVIDRREAFYADLAEKKK) the chain is on the mitochondrial intermembrane side. A propeptide spans 58-60 (AEN) (removed in mature form).

The protein belongs to the fungal cytochrome c oxidase subunit 7a family. In terms of assembly, component of the cytochrome c oxidase (complex IV, CIV), a multisubunit enzyme composed of a catalytic core of 3 subunits and several supernumerary subunits. The complex exists as a monomer or a dimer and forms supercomplexes (SCs) in the inner mitochondrial membrane with ubiquinol-cytochrome c oxidoreductase (cytochrome b-c1 complex, complex III, CIII).

The protein resides in the mitochondrion inner membrane. Its pathway is energy metabolism; oxidative phosphorylation. Its function is as follows. Component of the cytochrome c oxidase, the last enzyme in the mitochondrial electron transport chain which drives oxidative phosphorylation. The respiratory chain contains 3 multisubunit complexes succinate dehydrogenase (complex II, CII), ubiquinol-cytochrome c oxidoreductase (cytochrome b-c1 complex, complex III, CIII) and cytochrome c oxidase (complex IV, CIV), that cooperate to transfer electrons derived from NADH and succinate to molecular oxygen, creating an electrochemical gradient over the inner membrane that drives transmembrane transport and the ATP synthase. Cytochrome c oxidase is the component of the respiratory chain that catalyzes the reduction of oxygen to water. Electrons originating from reduced cytochrome c in the intermembrane space (IMS) are transferred via the dinuclear copper A center (CU(A)) of subunit 2 and heme A of subunit 1 to the active site in subunit 1, a binuclear center (BNC) formed by heme A3 and copper B (CU(B)). The BNC reduces molecular oxygen to 2 water molecules using 4 electrons from cytochrome c in the IMS and 4 protons from the mitochondrial matrix. This is Cytochrome c oxidase subunit 9, mitochondrial (COX9) from Candida glabrata (strain ATCC 2001 / BCRC 20586 / JCM 3761 / NBRC 0622 / NRRL Y-65 / CBS 138) (Yeast).